The primary structure comprises 327 residues: MQPLTRTICALFCLLLTLPLTFGSPFELEPRRNKLKIGTRIKQRRPTYAIAHMVLDKTGVKDAIKHGANALEIDVAAYRGGWWADHDMKAKSKGWSLESLFQVIAKENKHIAFVWLDLKTPDMCTGKKCNKKVLQPSKCKENEKCSMKSLQQLTRKYLKPAGVRVLFGFYKKHHARSAAFDYIQKSLGDGEAVCLSGEANKVMEIFKKEGSKIKPQRRVMDYGRTELPNGFGDCNEKGGKTCAELKNGAKLRQKGDLQRVFAWTSHVGEGKYVNKLLDKASVDGIIYGFAKTRYYHHKDTEKSSKDIIDRVKKSKSRYMVTGADKLW.

Positions 1-23 (MQPLTRTICALFCLLLTLPLTFG) are cleaved as a signal peptide. His-52 is an active-site residue. Positions 72, 74, and 117 each coordinate Mg(2+). An SMD-tail motif is present at residues 320-327 (VTGADKLW).

The protein belongs to the sphingomyelinase D/phospholipase D family. Requires Mg(2+) as cofactor.

The protein resides in the secreted. It carries out the reaction a sphingomyelin + H2O = an N-acylsphing-4-enine 1-phosphate + choline + H(+). Catalyzes the hydrolysis of sphingomyelin. Sphingomyelinases D are produced by some spider in their venoms, but also by arthropods such as ticks, or pathogenic bacteria and fungi. They might play a role in pathogenicity through different mechanisms, such as membrane destabilization and host cell penetration, but also pulmonary inflammation and cutaneous lesions. The polypeptide is Sphingomyelinase D (Paracoccidioides brasiliensis (strain Pb03)).